The sequence spans 326 residues: Adenosine receptor A1 (326 aa).

Residues Met-1 to Ala-10 are Extracellular-facing. A helical membrane pass occupies residues Ala-11 to Ala-33. Residues Val-34 to Cys-46 are Cytoplasmic-facing. The chain crosses the membrane as a helical span at residues Phe-47–Ile-69. The Extracellular portion of the chain corresponds to Asn-70–Cys-80. A disulfide bond links Cys-80 and Cys-169. A helical membrane pass occupies residues Leu-81–Ala-102. Residues Val-103–Arg-123 are Cytoplasmic-facing. A helical transmembrane segment spans residues Ala-124–Trp-146. Residues Asn-147–Ser-176 lie on the Extracellular side of the membrane. The N-linked (GlcNAc...) asparagine glycan is linked to Asn-159. The helical transmembrane segment at Met-177–Leu-201 threads the bilayer. The Cytoplasmic portion of the chain corresponds to Glu-202–Ser-235. Residues Leu-236–Phe-259 form a helical membrane-spanning segment. Residues Cys-260–Ser-267 are Extracellular-facing. The chain crosses the membrane as a helical span at residues Ile-268–Ile-292. Residues Gln-293–Asp-326 are Cytoplasmic-facing. Cys-309 carries the S-palmitoyl cysteine lipid modification.

Belongs to the G-protein coupled receptor 1 family.

It localises to the cell membrane. Its function is as follows. Receptor for adenosine. The activity of this receptor is mediated by G proteins which inhibit adenylyl cyclase. This Homo sapiens (Human) protein is Adenosine receptor A1 (ADORA1).